The following is a 185-amino-acid chain: Hypoxanthine/guanine phosphoribosyltransferase (185 aa).

It belongs to the purine/pyrimidine phosphoribosyltransferase family. Archaeal HPRT subfamily. Homodimer.

The protein localises to the cytoplasm. The catalysed reaction is IMP + diphosphate = hypoxanthine + 5-phospho-alpha-D-ribose 1-diphosphate. The enzyme catalyses GMP + diphosphate = guanine + 5-phospho-alpha-D-ribose 1-diphosphate. It functions in the pathway purine metabolism; IMP biosynthesis via salvage pathway; IMP from hypoxanthine: step 1/1. Functionally, catalyzes a salvage reaction resulting in the formation of IMP that is energically less costly than de novo synthesis. The polypeptide is Hypoxanthine/guanine phosphoribosyltransferase (Methanococcus maripaludis (strain C5 / ATCC BAA-1333)).